The sequence spans 138 residues: MNDYTRTIRLSDTDAAGVVYFASLLSICHEAYEASLEASGIDLKSFFRDSEVVIPIVHAEIDFFRPLYSGDRIIITLTTLQLKDTEFEITYQVGLVAPQSSLIAKAKTRHVAINPQTRQRTPLSESLMQWLKSTENSE.

Residue D14 is part of the active site.

The protein belongs to the 4-hydroxybenzoyl-CoA thioesterase family. DHNA-CoA hydrolase subfamily.

It carries out the reaction 1,4-dihydroxy-2-naphthoyl-CoA + H2O = 1,4-dihydroxy-2-naphthoate + CoA + H(+). It participates in cofactor biosynthesis; phylloquinone biosynthesis. It functions in the pathway quinol/quinone metabolism; 1,4-dihydroxy-2-naphthoate biosynthesis; 1,4-dihydroxy-2-naphthoate from chorismate: step 7/7. In terms of biological role, catalyzes the hydrolysis of 1,4-dihydroxy-2-naphthoyl-CoA (DHNA-CoA) to 1,4-dihydroxy-2-naphthoate (DHNA), a reaction involved in phylloquinone (vitamin K1) biosynthesis. This is 1,4-dihydroxy-2-naphthoyl-CoA hydrolase from Rippkaea orientalis (strain PCC 8801 / RF-1) (Cyanothece sp. (strain PCC 8801)).